The following is a 359-amino-acid chain: Photosystem II protein D1 1 (359 aa).

The next 3 helical transmembrane spans lie at 29 to 46 (YVGWFGVLMIPTLLAATT), 118 to 133 (HFLIGIFCYMGREWEL), and 142 to 156 (WICVAYSAPVAAASA). Position 118 (histidine 118) interacts with chlorophyll a. Tyrosine 126 contacts pheophytin a. Positions 170 and 189 each coordinate [CaMn4O5] cluster. Residues 197 to 218 (FHMMGVAGVFGGSLFSAMHGSL) traverse the membrane as a helical segment. Histidine 198 is a chlorophyll a binding site. Residues histidine 215 and 264–265 (SF) each bind a quinone. Residue histidine 215 participates in Fe cation binding. Residue histidine 272 participates in Fe cation binding. The chain crosses the membrane as a helical span at residues 274–288 (FLAAWPVVGIWFTAL). [CaMn4O5] cluster-binding residues include histidine 332, glutamate 333, aspartate 342, and alanine 344. A propeptide spanning residues 345-359 (AAESTPVALQAPAIG) is cleaved from the precursor.

It belongs to the reaction center PufL/M/PsbA/D family. As to quaternary structure, PSII is composed of 1 copy each of membrane proteins PsbA, PsbB, PsbC, PsbD, PsbE, PsbF, PsbH, PsbI, PsbJ, PsbK, PsbL, PsbM, PsbT, PsbX, PsbY, PsbZ, Psb30/Ycf12, peripheral proteins PsbO, CyanoQ (PsbQ), PsbU, PsbV and a large number of cofactors. It forms dimeric complexes. The cofactor is The D1/D2 heterodimer binds P680, chlorophylls that are the primary electron donor of PSII, and subsequent electron acceptors. It shares a non-heme iron and each subunit binds pheophytin, quinone, additional chlorophylls, carotenoids and lipids. D1 provides most of the ligands for the Mn4-Ca-O5 cluster of the oxygen-evolving complex (OEC). There is also a Cl(-1) ion associated with D1 and D2, which is required for oxygen evolution. The PSII complex binds additional chlorophylls, carotenoids and specific lipids.. In terms of processing, tyr-161 forms a radical intermediate that is referred to as redox-active TyrZ, YZ or Y-Z. Post-translationally, C-terminally processed by CtpA; processing is essential to allow assembly of the oxygen-evolving complex and thus photosynthetic growth.

The protein resides in the cellular thylakoid membrane. It catalyses the reaction 2 a plastoquinone + 4 hnu + 2 H2O = 2 a plastoquinol + O2. Its function is as follows. Photosystem II (PSII) is a light-driven water:plastoquinone oxidoreductase that uses light energy to abstract electrons from H(2)O, generating O(2) and a proton gradient subsequently used for ATP formation. It consists of a core antenna complex that captures photons, and an electron transfer chain that converts photonic excitation into a charge separation. The D1/D2 (PsbA/PsbD) reaction center heterodimer binds P680, the primary electron donor of PSII as well as several subsequent electron acceptors. The chain is Photosystem II protein D1 1 from Synechococcus sp. (strain WH7803).